A 281-amino-acid chain; its full sequence is Bifunctional protein FolD (281 aa).

163–165 lines the NADP(+) pocket; that stretch reads GRS.

Belongs to the tetrahydrofolate dehydrogenase/cyclohydrolase family. Homodimer.

It catalyses the reaction (6R)-5,10-methylene-5,6,7,8-tetrahydrofolate + NADP(+) = (6R)-5,10-methenyltetrahydrofolate + NADPH. The enzyme catalyses (6R)-5,10-methenyltetrahydrofolate + H2O = (6R)-10-formyltetrahydrofolate + H(+). It participates in one-carbon metabolism; tetrahydrofolate interconversion. Its function is as follows. Catalyzes the oxidation of 5,10-methylenetetrahydrofolate to 5,10-methenyltetrahydrofolate and then the hydrolysis of 5,10-methenyltetrahydrofolate to 10-formyltetrahydrofolate. This chain is Bifunctional protein FolD, found in Leuconostoc mesenteroides subsp. mesenteroides (strain ATCC 8293 / DSM 20343 / BCRC 11652 / CCM 1803 / JCM 6124 / NCDO 523 / NBRC 100496 / NCIMB 8023 / NCTC 12954 / NRRL B-1118 / 37Y).